The primary structure comprises 208 residues: Thymidylate kinase (208 aa).

Residue 13-20 (GLEGAGKS) coordinates ATP.

The protein belongs to the thymidylate kinase family.

It carries out the reaction dTMP + ATP = dTDP + ADP. Functionally, phosphorylation of dTMP to form dTDP in both de novo and salvage pathways of dTTP synthesis. The chain is Thymidylate kinase from Shewanella amazonensis (strain ATCC BAA-1098 / SB2B).